The following is a 118-amino-acid chain: Integration host factor subunit alpha (118 aa).

Residues 97-118 (NGAMPMSTEESDENTAQSASGG) are disordered.

This sequence belongs to the bacterial histone-like protein family. Heterodimer of an alpha and a beta chain.

Its function is as follows. This protein is one of the two subunits of integration host factor, a specific DNA-binding protein that functions in genetic recombination as well as in transcriptional and translational control. This Rhodopseudomonas palustris (strain ATCC BAA-98 / CGA009) protein is Integration host factor subunit alpha.